Consider the following 43-residue polypeptide: Potassium channel toxin gamma-KTx 4.3 (43 aa).

4 disulfide bridges follow: Cys-5–Cys-23, Cys-11–Cys-34, Cys-20–Cys-39, and Cys-24–Cys-41.

The protein belongs to the ergtoxin family. Gamma-KTx 4 subfamily. In terms of tissue distribution, expressed by the venom gland.

The protein resides in the secreted. Functionally, reversibly blocks Kv11/ERG potassium channels. The sequence is that of Potassium channel toxin gamma-KTx 4.3 from Centruroides exilicauda (Bark scorpion).